Consider the following 391-residue polypeptide: Phosphoprotein (391 aa).

Phosphothreonine is present on residues threonine 10, threonine 16, and threonine 39. Positions 55 to 65 (KNIQYPTTSHQ) are enriched in polar residues. The tract at residues 55–90 (KNIQYPTTSHQGSKSKGRGSGARPIIVSSSEGGTGG) is disordered. Serine 69 carries the phosphoserine modification. Phosphothreonine occurs at positions 91, 150, and 165. The tract at residues 145–208 (TSTPVTEFKR…PQQDSTPANV (64 aa)) is disordered. Serine 188 is modified (phosphoserine). Residues 216-279 (ISANEIMDLL…MATVKIMDPG (64 aa)) form a multimerization region. A coiled-coil region spans residues 218–245 (ANEIMDLLRGMDARLQHLEQKVDKVLAQ). Threonine 250 is subject to Phosphothreonine. Position 257 is a phosphoserine (serine 257). Residues threonine 258 and threonine 282 each carry the phosphothreonine modification. 2 positions are modified to phosphoserine: serine 292 and serine 294. Threonine 298 is subject to Phosphothreonine. Residues serine 301 and serine 374 each carry the phosphoserine modification. The tract at residues 343–391 (AGRKVMITKMITDCVANPQMKQVFEQRLAKASTEDALNDIKRDIIRSAI) is interaction with the nucleoprotein. Threonine 375 bears the Phosphothreonine mark.

The protein belongs to the rubulavirus/avulavirus P protein family. In terms of assembly, homotetramer. Interacts (via multimerization domain) with polymerase L; this interaction forms the polymerase L-P complex. Interacts (via N-terminus) with N0 (via Ncore); this interaction allows P to chaperon N0 to avoid N polymerization before encapsidation. Interacts (via C-terminus) with N-RNA template; this interaction positions the polymerase on the template for both transcription and replication. Interacts with host RPS6KB1 kinase; this interaction may play a role in the viral replication and transcription.

Essential cofactor of the RNA polymerase L that plays a central role in the transcription and replication by forming the polymerase complex with RNA polymerase L and recruiting L to the genomic N-RNA template for RNA synthesis. Also plays a central role in the encapsidation of nascent RNA chains by forming the encapsidation complex with the nucleocapsid protein N (N-P complex). Acts as a chaperone for newly synthesized free N protein, so-called N0, allowing encapsidation of nascent RNA chains during replication. The nucleoprotein protein N prevents excessive phosphorylation of P, which leads to down-regulation of viral transcription/ replication. Participates, together with N, in the formation of viral factories (viroplasms), which are large inclusions in the host cytoplasm where replication takes place. The polypeptide is Phosphoprotein (Mumps virus genotype B (strain Miyahara vaccine) (MuV)).